The sequence spans 486 residues: ATP synthase subunit beta (486 aa).

An ATP-binding site is contributed by 170-177 (GGAGVGKT).

Belongs to the ATPase alpha/beta chains family. As to quaternary structure, F-type ATPases have 2 components, CF(1) - the catalytic core - and CF(0) - the membrane proton channel. CF(1) has five subunits: alpha(3), beta(3), gamma(1), delta(1), epsilon(1). CF(0) has three main subunits: a(1), b(2) and c(9-12). The alpha and beta chains form an alternating ring which encloses part of the gamma chain. CF(1) is attached to CF(0) by a central stalk formed by the gamma and epsilon chains, while a peripheral stalk is formed by the delta and b chains.

The protein resides in the cell membrane. The catalysed reaction is ATP + H2O + 4 H(+)(in) = ADP + phosphate + 5 H(+)(out). Functionally, produces ATP from ADP in the presence of a proton gradient across the membrane. The catalytic sites are hosted primarily by the beta subunits. This is ATP synthase subunit beta from Kineococcus radiotolerans (strain ATCC BAA-149 / DSM 14245 / SRS30216).